The primary structure comprises 462 residues: Arginine biosynthesis bifunctional protein ArgJ, mitochondrial (462 aa).

Substrate is bound by residues threonine 200, lysine 228, threonine 239, glutamate 326, asparagine 457, and threonine 462. The active-site Nucleophile is threonine 239.

It belongs to the ArgJ family. In terms of assembly, heterodimer of an alpha and a beta chain. In terms of processing, the alpha and beta chains are autoproteolytically processed from a single precursor protein within the mitochondrion.

The protein localises to the mitochondrion matrix. The enzyme catalyses N(2)-acetyl-L-ornithine + L-glutamate = N-acetyl-L-glutamate + L-ornithine. It carries out the reaction L-glutamate + acetyl-CoA = N-acetyl-L-glutamate + CoA + H(+). The protein operates within amino-acid biosynthesis; L-arginine biosynthesis; L-ornithine and N-acetyl-L-glutamate from L-glutamate and N(2)-acetyl-L-ornithine (cyclic): step 1/1. It functions in the pathway amino-acid biosynthesis; L-arginine biosynthesis; N(2)-acetyl-L-ornithine from L-glutamate: step 1/4. Catalyzes two activities which are involved in the cyclic version of arginine biosynthesis: the synthesis of acetylglutamate from glutamate and acetyl-CoA, and of ornithine by transacetylation between acetylornithine and glutamate. The sequence is that of Arginine biosynthesis bifunctional protein ArgJ, mitochondrial from Pyrenophora tritici-repentis (strain Pt-1C-BFP) (Wheat tan spot fungus).